The chain runs to 709 residues: MREDHSPRRNNTIENTLTELLPNRLYFGCFPNPDAIDKSDKSVKKTCFININNKFHYEPFYEDFGPWNLSVLYRLCVQVGKLLEVEEKRSRRVVLFCQDDGTGQYDKIRVNTAYVLGAYLIIYQGFSADDAYLKVSSGETVKFVGFRDASMGSPQYLLHLHDVLRGIEKALKFGWLDFSDFDYEEYEFYERVENGDFNWIIPGKILSFCGPHNESREENGYPYHAPDVYFDYFRENKVSTIVRLNAKNYDASKFTKAGFDHVDLFFIDGSTPSDEIMLKFIKVVDNTKGGVAVHCKAGLGRTGTLIACWMMKEYGLTAGECMGWLRVCRPGSVIGPQQPYLIEKQKFCWSLSQSNGVHLTQNKEEKRNVRRLVNQVDDINLGEERISPKSRENTRPNILRRRVQVQNGRSTAPVTIAPAGTSESRRSTKPSRVVDETALDDQGRSQGDRLLQLKAKHQHESETTSPNSSSSRRFVKSSTPQMTVPSQAYLNRNREPIIVTPSKNGTSSGTSSRQLKTTPNGNVAYRTRNSSGNTTSTLTRTGNESYRFHNSLFYEPASAVFPSMASRRSETTRYLSPTTPIKPMSPSYTDGTSPRYKARLRSENPIGSTTSTPFSLQPQITKCSLTAESKPPKRILSMPGTSKSTSSLKKIQVSRPRPYPSTGVRVELCANGKSYDIRPRKEAHVIPGAGLAANTEALLGVCKLVNTLS.

The Tyrosine-protein phosphatase domain occupies Asp-196 to Ser-354. The active-site Phosphocysteine intermediate is the Cys-295. The Nuclear localization signal signature appears at Lys-366–Arg-371. The Nuclear export signal motif lies at Leu-372–Leu-381. Disordered regions lie at residues Val-403 to Thr-541, Arg-573 to Pro-594, and Glu-628 to Ser-661. A compositionally biased stretch (polar residues) spans Gln-404–Pro-413. The span at Thr-463 to Thr-479 shows a compositional bias: low complexity. 2 stretches are compositionally biased toward polar residues: residues Pro-480–Leu-490 and Pro-501–Gly-521. Low complexity predominate over residues Arg-526–Thr-541. Residues Pro-639 to Lys-649 are compositionally biased toward polar residues.

Belongs to the protein-tyrosine phosphatase family. Non-receptor class CDC14 subfamily.

It is found in the cytoplasm. The protein localises to the cytoskeleton. It localises to the microtubule organizing center. Its subcellular location is the centrosome. The protein resides in the spindle. It is found in the midbody. The protein localises to the nucleus. The catalysed reaction is O-phospho-L-tyrosyl-[protein] + H2O = L-tyrosyl-[protein] + phosphate. With respect to regulation, inhibited by sodium orthovanadate. Weakly inhibited by sodium fluoride and okadaic acid. In terms of biological role, protein phosphatase that negatively regulates the G1-to-S phase transition to inhibit the cell cycle and establish quiescence in cells of multiple lineages including vulval, hypodermal and intestinal. Promotes nuclear accumulation and activity of the cyclin-dependent kinase inhibitor cki-1 which leads to inhibition of G1 progression during vulval tissue development. Has been shown to not be required for cytokinesis. However, in the embryo, in a contrasting study, has been shown to act as a regulator of central spindle formation and cytokinesis, and may be required for localization of the spindle component zen-4, and its interacting partner air-2 at the spindle during late cell divisions. Its function is as follows. Main regulator of cell cycle arrest in vulval precursor cells. The sequence is that of Tyrosine-protein phosphatase cdc-14 from Caenorhabditis elegans.